A 3681-amino-acid chain; its full sequence is E3 ubiquitin-protein ligase UPL1 (3681 aa).

Residues 882-891 show a composition bias toward basic and acidic residues; that stretch reads DEKKSVDRGS. The tract at residues 882-912 is disordered; the sequence is DEKKSVDRGSDNSVSASSSTAERESDEDSSN. Positions 892-901 are enriched in low complexity; it reads DNSVSASSST. One can recognise a UBA domain in the interval 1269-1310; sequence QLDESIVGMIVEMGFSRSRAEIALRRVGTNSVEMAMDWLFTN. A UIM domain is found at 1316–1335; the sequence is QEDDELAQALALSLGNSSET. 10 disordered regions span residues 1332-1358, 1768-1802, 2015-2094, 2125-2151, 2253-2287, 2401-2435, 2483-2505, 2537-2606, 2975-3003, and 3228-3254; these read SSETPKLEDTEKPVDVPQEEAEPKEPP, MEVDEPTTKVKGKSKVGEPEKASSSRVGEPEKAEI, EQLK…MRIE, ENRADDDVDDDMGDEGEDDEGDDEDAD, RQTGRSSLDRSGSEVHGFQHPLFSRPSQTGNTASV, NTTEIQEQLHPDVPPSVGSETVLGDGNEGGQQSEE, PLPLNSTPNEIDRMEVGEGDGAP, IAPP…APEV, SPSSGVPEKLENKPVGEEASSETRKDAES, and TAGEVKESSAHGSSSKTSVDSQKKTDG. Composition is skewed to basic and acidic residues over residues 1336-1345, 1782-1802, and 2017-2037; these read PKLEDTEKPV, KVGEPEKASSSRVGEPEKAEI, and LKSEVPNEKKNRDSDERHDSH. Over residues 2038–2087 the composition is skewed to polar residues; that stretch reads GNSTETEADELNQNNSSLQQVTDAAGNGQEQAQVSSQSAGERGSSQTQAM. Positions 2130–2151 are enriched in acidic residues; the sequence is DDVDDDMGDEGEDDEGDDEDAD. Over residues 2253 to 2265 the composition is skewed to basic and acidic residues; sequence RQTGRSSLDRSGS. Residues 2277–2287 show a composition bias toward polar residues; sequence RPSQTGNTASV. S2598 bears the Phosphoserine mark. The span at 2982-3002 shows a compositional bias: basic and acidic residues; it reads EKLENKPVGEEASSETRKDAE. Residues 3237-3247 show a composition bias toward polar residues; that stretch reads AHGSSSKTSVD. An HECT domain is found at 3340 to 3681; it reads SPQDLKGRLN…HEASEGFGFA (342 aa). The Glycyl thioester intermediate role is filled by C3648.

Belongs to the UPL family. TOM1/PTR1 subfamily. As to expression, widely expressed. Expressed in root, stem, cauline and rosette leaf, seedling and flower (at protein level).

The catalysed reaction is S-ubiquitinyl-[E2 ubiquitin-conjugating enzyme]-L-cysteine + [acceptor protein]-L-lysine = [E2 ubiquitin-conjugating enzyme]-L-cysteine + N(6)-ubiquitinyl-[acceptor protein]-L-lysine.. It functions in the pathway protein modification; protein ubiquitination. Functionally, probable E3 ubiquitin-protein ligase which mediates ubiquitination and subsequent proteasomal degradation of target proteins. In Arabidopsis thaliana (Mouse-ear cress), this protein is E3 ubiquitin-protein ligase UPL1 (UPL1).